Reading from the N-terminus, the 362-residue chain is Dihydroorotate dehydrogenase (quinone) (362 aa).

FMN is bound by residues 62 to 66 (AGYDK) and T86. K66 provides a ligand contact to substrate. Substrate is bound at residue 111–115 (NRLGF). FMN contacts are provided by N139 and N170. N170 is a binding site for substrate. S173 acts as the Nucleophile in catalysis. Position 175 (N175) interacts with substrate. The FMN site is built by K215 and S243. 244–245 (NT) is a substrate binding site. FMN contacts are provided by residues G266, G295, and 316–317 (YS).

The protein belongs to the dihydroorotate dehydrogenase family. Type 2 subfamily. As to quaternary structure, monomer. Requires FMN as cofactor.

The protein localises to the cell membrane. It catalyses the reaction (S)-dihydroorotate + a quinone = orotate + a quinol. Its pathway is pyrimidine metabolism; UMP biosynthesis via de novo pathway; orotate from (S)-dihydroorotate (quinone route): step 1/1. Its function is as follows. Catalyzes the conversion of dihydroorotate to orotate with quinone as electron acceptor. This Sinorhizobium fredii (strain NBRC 101917 / NGR234) protein is Dihydroorotate dehydrogenase (quinone).